Here is an 882-residue protein sequence, read N- to C-terminus: Translation initiation factor IF-2 (882 aa).

Disordered regions lie at residues 67–202 and 223–278; these read KTVS…EKAR and ERYG…KHMK. Composition is skewed to basic and acidic residues over residues 95–152 and 161–202; these read VKRD…EAKA and EQPK…EKAR. The span at 251-264 shows a compositional bias: basic residues; sequence GRRNRNKTQTKSKR. The segment covering 265-274 has biased composition (basic and acidic residues); the sequence is GGKDAREGRE. Residues 382-551 form the tr-type G domain; it reads PRAPVVTIMG…LLQAEVLELK (170 aa). The interval 391 to 398 is G1; that stretch reads GHVDHGKT. 391–398 serves as a coordination point for GTP; the sequence is GHVDHGKT. The tract at residues 416–420 is G2; sequence GITQH. Residues 437-440 are G3; the sequence is DTPG. Residues 437–441 and 491–494 each bind GTP; these read DTPGH and NKMD. Residues 491–494 form a G4 region; sequence NKMD. The segment at 527–529 is G5; sequence SAK.

The protein belongs to the TRAFAC class translation factor GTPase superfamily. Classic translation factor GTPase family. IF-2 subfamily.

It localises to the cytoplasm. One of the essential components for the initiation of protein synthesis. Protects formylmethionyl-tRNA from spontaneous hydrolysis and promotes its binding to the 30S ribosomal subunits. Also involved in the hydrolysis of GTP during the formation of the 70S ribosomal complex. The protein is Translation initiation factor IF-2 of Shewanella amazonensis (strain ATCC BAA-1098 / SB2B).